The primary structure comprises 413 residues: MNIYAVGGAIRDELLGVPVQDRDYVVVGATPEQMVAQGFRPVGKDFPVFLHPDTQEEYALARTERKTAAGYHGFQFYFAPDVTLDEDLARRDLTINAMAREVSPEGALVGPVIDPFDGQADLRARVFRHVGDAFVEDPVRILRIARFAARFADFTVADDTLALMRRMVDAGEADALVAERVWQEIARGLMEAKPSRMFAVLRECGALARVLPEVDALWGVPQRADYHPEVDTGVHVMMVVDYAAKQGYSLPVRFAALTHDLGKATTPADVLPRHVGHEGRSVELIKPLCERLRVPNDCRDLALVVAREHGNLHRVMEMGAAALVRFFERSDALRKPARFAEMLQACESDARGRLGLDTQPYPQAERLRVALVAARSVDAGAIARGVGDDVMQIKDAVHRARVEAVKQALAIGE.

2 residues coordinate ATP: glycine 8 and arginine 11. CTP contacts are provided by glycine 8 and arginine 11. Residues aspartate 21 and aspartate 23 each contribute to the Mg(2+) site. ATP contacts are provided by arginine 91, arginine 143, and arginine 146. Residues arginine 91, arginine 143, and arginine 146 each coordinate CTP. Residues threonine 232–leucine 333 enclose the HD domain.

It belongs to the tRNA nucleotidyltransferase/poly(A) polymerase family. Bacterial CCA-adding enzyme type 1 subfamily. Monomer. Can also form homodimers and oligomers. The cofactor is Mg(2+). Ni(2+) is required as a cofactor.

The enzyme catalyses a tRNA precursor + 2 CTP + ATP = a tRNA with a 3' CCA end + 3 diphosphate. It carries out the reaction a tRNA with a 3' CCA end + 2 CTP + ATP = a tRNA with a 3' CCACCA end + 3 diphosphate. Functionally, catalyzes the addition and repair of the essential 3'-terminal CCA sequence in tRNAs without using a nucleic acid template. Adds these three nucleotides in the order of C, C, and A to the tRNA nucleotide-73, using CTP and ATP as substrates and producing inorganic pyrophosphate. tRNA 3'-terminal CCA addition is required both for tRNA processing and repair. Also involved in tRNA surveillance by mediating tandem CCA addition to generate a CCACCA at the 3' terminus of unstable tRNAs. While stable tRNAs receive only 3'-terminal CCA, unstable tRNAs are marked with CCACCA and rapidly degraded. In Burkholderia ambifaria (strain MC40-6), this protein is Multifunctional CCA protein.